Reading from the N-terminus, the 163-residue chain is Cytosolic iron-sulfur assembly component 2B (163 aa).

The protein belongs to the MIP18 family.

It localises to the nucleus. Its subcellular location is the cytoplasm. It is found in the cytoskeleton. The protein localises to the spindle. In terms of biological role, component of the cytosolic iron-sulfur (Fe/S) protein assembly machinery. Required for the maturation of extramitochondrial Fe/S proteins. May play a role in chromosome segregation through establishment of sister chromatid cohesion. In Dictyostelium discoideum (Social amoeba), this protein is Cytosolic iron-sulfur assembly component 2B.